The following is a 223-amino-acid chain: uncharacterized protein (223 aa).

The Tyr recombinase domain maps to 29–220 (KQTYKMFKED…AKEILKNIGD (192 aa)). Catalysis depends on residues Arg71, Lys103, His170, Arg173, and His196. Tyr205 functions as the O-(3'-phospho-DNA)-tyrosine intermediate in the catalytic mechanism.

It belongs to the 'phage' integrase family.

This is an uncharacterized protein from Methanocaldococcus jannaschii (strain ATCC 43067 / DSM 2661 / JAL-1 / JCM 10045 / NBRC 100440) (Methanococcus jannaschii).